We begin with the raw amino-acid sequence, 217 residues long: ATP-dependent Clp protease proteolytic subunit (217 aa).

Ser121 functions as the Nucleophile in the catalytic mechanism. His146 is a catalytic residue.

It belongs to the peptidase S14 family. Fourteen ClpP subunits assemble into 2 heptameric rings which stack back to back to give a disk-like structure with a central cavity, resembling the structure of eukaryotic proteasomes.

The protein resides in the cytoplasm. The enzyme catalyses Hydrolysis of proteins to small peptides in the presence of ATP and magnesium. alpha-casein is the usual test substrate. In the absence of ATP, only oligopeptides shorter than five residues are hydrolyzed (such as succinyl-Leu-Tyr-|-NHMec, and Leu-Tyr-Leu-|-Tyr-Trp, in which cleavage of the -Tyr-|-Leu- and -Tyr-|-Trp bonds also occurs).. Cleaves peptides in various proteins in a process that requires ATP hydrolysis. Has a chymotrypsin-like activity. Plays a major role in the degradation of misfolded proteins. The polypeptide is ATP-dependent Clp protease proteolytic subunit (Burkholderia lata (strain ATCC 17760 / DSM 23089 / LMG 22485 / NCIMB 9086 / R18194 / 383)).